The chain runs to 646 residues: MAAESGSDFQQRRRRRRDPEEPEKTELSERELAVAVAVSQENDEENEERWVGPLPVEATLAKKRKVLEFERVYLDNLPSASMYERSYMHRDVITHVVCTKTDFIITASHDGHVKFWKKIEEGIEFVKHFRSHLGVIECIAVSSEGALFCSVGDDKAMKVFDVVNFDMINMLKLGYFPGQCEWIYCPGDAISSVAASEKSTGKIFIYDGRGDNQPLHIFDKLHTSPLTQIRLNPVYKAVVSSDKSGMIEYWTGPPHEYKFPKNVNWEYKTDTDLYEFAKCKAYPTSICFSPDGKKIATIGSDRKVRISKFLTGKLMRVFDESLSMFTELQQMRQQLPDMEFGRRMAVERELEKVDAVRLINIVFDETGHFVLYGTMLGIKVINVETNRCVRILGKQENIRVMQLALFQGIAKKHRAATTIEMKASENPVLQNIQADPTVVCTPFKKNRFYMFTKREPEDTKSADSDRDVFNEKPSKEEVMAATQAEGPKRVSDSAIIHTSMGDIHTKLFPVECPKTVENFCVHSRNGYYNGHTFHRIIKGFMIQTGDPTGTGMGGESIWGGEFEDEFHSTLRHDRPYTLSMANAGSNTNGSQFFITVVPTPWLDNKHTVFGRVTKGMEVVQRISNVKVNPKTDKPYEDVSIINITVK.

Positions 1-30 (MAAESGSDFQQRRRRRRDPEEPEKTELSER) are disordered. At alanine 2 the chain carries N-acetylalanine. The span at 17–30 (RDPEEPEKTELSER) shows a compositional bias: basic and acidic residues. 4 WD repeats span residues 88-126 (MHRD…IEFV), 131-170 (SHLG…MINM), 221-260 (LHTS…YKFP), and 278-319 (KCKA…RVFD). Basic and acidic residues predominate over residues 455 to 478 (EPEDTKSADSDRDVFNEKPSKEEV). Positions 455 to 490 (EPEDTKSADSDRDVFNEKPSKEEVMAATQAEGPKRV) are disordered. The PPIase cyclophilin-type domain maps to 490 to 645 (VSDSAIIHTS…EDVSIINITV (156 aa)).

Belongs to the cyclophilin-type PPIase family. PPIL1 subfamily. As to quaternary structure, identified in the spliceosome C complex.

It is found in the nucleus. The enzyme catalyses [protein]-peptidylproline (omega=180) = [protein]-peptidylproline (omega=0). With respect to regulation, inhibited by cyclosporin A (CsA). In terms of biological role, PPIase that catalyzes the cis-trans isomerization of proline imidic peptide bonds in oligopeptides and may therefore assist protein folding. May be involved in pre-mRNA splicing. The sequence is that of Peptidylprolyl isomerase domain and WD repeat-containing protein 1 from Pongo abelii (Sumatran orangutan).